Here is a 435-residue protein sequence, read N- to C-terminus: Methylenetetrahydrofolate--tRNA-(uracil-5-)-methyltransferase TrmFO (435 aa).

7-12 is an FAD binding site; it reads GAGLAG.

Belongs to the MnmG family. TrmFO subfamily. FAD is required as a cofactor.

The protein localises to the cytoplasm. The enzyme catalyses uridine(54) in tRNA + (6R)-5,10-methylene-5,6,7,8-tetrahydrofolate + NADH + H(+) = 5-methyluridine(54) in tRNA + (6S)-5,6,7,8-tetrahydrofolate + NAD(+). It carries out the reaction uridine(54) in tRNA + (6R)-5,10-methylene-5,6,7,8-tetrahydrofolate + NADPH + H(+) = 5-methyluridine(54) in tRNA + (6S)-5,6,7,8-tetrahydrofolate + NADP(+). In terms of biological role, catalyzes the folate-dependent formation of 5-methyl-uridine at position 54 (M-5-U54) in all tRNAs. This is Methylenetetrahydrofolate--tRNA-(uracil-5-)-methyltransferase TrmFO from Thermotoga petrophila (strain ATCC BAA-488 / DSM 13995 / JCM 10881 / RKU-1).